Consider the following 461-residue polypeptide: Cysteine--tRNA ligase (461 aa).

Cys28 contributes to the Zn(2+) binding site. The 'HIGH' region motif lies at 30–40; the sequence is VTIYDLCHIGH. The Zn(2+) site is built by Cys209, His234, and Glu238. Residues 266-270 carry the 'KMSKS' region motif; the sequence is KMSKS. Residue Lys269 participates in ATP binding.

Belongs to the class-I aminoacyl-tRNA synthetase family. Monomer. Requires Zn(2+) as cofactor.

It localises to the cytoplasm. It carries out the reaction tRNA(Cys) + L-cysteine + ATP = L-cysteinyl-tRNA(Cys) + AMP + diphosphate. The sequence is that of Cysteine--tRNA ligase from Serratia proteamaculans (strain 568).